The chain runs to 486 residues: G2/mitotic-specific cyclin-4 (486 aa).

2 disordered regions span residues 1–80 (MRSY…SSNK) and 105–126 (VLLN…DKEN). The span at 25 to 41 (ANLSSNHTTAGQPSTSS) shows a compositional bias: polar residues. Over residues 108 to 123 (NDDDDETDDEFDDEED) the composition is skewed to acidic residues. Positions 122 to 184 (EDKENRYHDL…QSHTQDMRSI (63 aa)) form a coiled coil. Residues 234-359 (EIFNYLHELE…FMIDVLEFDL (126 aa)) form the Cyclin N-terminal domain.

The protein belongs to the cyclin family. Cyclin AB subfamily. In terms of assembly, interacts with IQG1.

Its function is as follows. 2/mitotic-specific cyclin essential for the control of the cell cycle at the G2/M (mitosis) transition. G2/M cyclins accumulate steadily during G2 and are abruptly destroyed at mitosis. Degradation is necessary for the cell to exit from mitosis. Plays a role in morphogenesis by negatively regulating polarized growth. Through binding to CDC28 regulates cytokinesis, partly by phosphorylation of the actomyosin ring component IQG1. The chain is G2/mitotic-specific cyclin-4 (CLB4) from Candida albicans (strain SC5314 / ATCC MYA-2876) (Yeast).